Here is a 419-residue protein sequence, read N- to C-terminus: eIF5-mimic protein 1 (419 aa).

The tract at residues 1–22 (MNKHQKPVLTGQRFKTRKRDEK) is disordered. Lysine 117 carries the N6-acetyllysine modification. A W2 domain is found at 248–415 (VQQSLGTRKE…QNAEEESESE (168 aa)). 3 positions are modified to phosphoserine: serine 412, serine 414, and serine 419.

Belongs to the BZW family. Interacts with EIF3E, EIF2S2 and EIF3C.

The protein localises to the cytoplasm. Its function is as follows. Translation initiation regulator which represses non-AUG initiated translation and repeat-associated non-AUG (RAN) initiated translation by acting as a competitive inhibitor of eukaryotic translation initiation factor 5 (EIF5) function. Increases the accuracy of translation initiation by impeding EIF5-dependent translation from non-AUG codons by competing with it for interaction with EIF2S2 within the 43S pre-initiation complex (PIC) in an EIF3C-binding dependent manner. The protein is eIF5-mimic protein 1 (Bzw2) of Mus musculus (Mouse).